An 81-amino-acid polypeptide reads, in one-letter code: Photosystem I iron-sulfur center (81 aa).

4Fe-4S ferredoxin-type domains lie at 2–31 (SHSV…MVPW) and 37–68 (GQIA…IRVY). [4Fe-4S] cluster contacts are provided by C11, C14, C17, C21, C48, C51, C54, and C58.

As to quaternary structure, the cyanobacterial PSI reaction center is composed of one copy each of PsaA,B,C,D,E,F,I,J,K,L,M and X, and forms trimeric complexes. Requires [4Fe-4S] cluster as cofactor.

The protein resides in the cellular thylakoid membrane. It catalyses the reaction reduced [plastocyanin] + hnu + oxidized [2Fe-2S]-[ferredoxin] = oxidized [plastocyanin] + reduced [2Fe-2S]-[ferredoxin]. Apoprotein for the two 4Fe-4S centers FA and FB of photosystem I (PSI); essential for photochemical activity. FB is the terminal electron acceptor of PSI, donating electrons to ferredoxin. The C-terminus interacts with PsaA/B/D and helps assemble the protein into the PSI complex. Required for binding of PsaD and PsaE to PSI. PSI is a plastocyanin/cytochrome c6-ferredoxin oxidoreductase, converting photonic excitation into a charge separation, which transfers an electron from the donor P700 chlorophyll pair to the spectroscopically characterized acceptors A0, A1, FX, FA and FB in turn. In Synechococcus sp. (strain RCC307), this protein is Photosystem I iron-sulfur center.